Reading from the N-terminus, the 183-residue chain is UPF0316 protein EF_1609 (183 aa).

3 helical membrane-spanning segments follow: residues 1-21 (MVVD…YITL), 35-55 (VIAP…LSMV), and 62-82 (PLNL…GIKI).

It belongs to the UPF0316 family.

It is found in the cell membrane. The sequence is that of UPF0316 protein EF_1609 from Enterococcus faecalis (strain ATCC 700802 / V583).